A 330-amino-acid chain; its full sequence is uncharacterized protein (330 aa).

H257 is a catalytic residue.

This sequence belongs to the IUNH family.

This is an uncharacterized protein from Schizosaccharomyces pombe (strain 972 / ATCC 24843) (Fission yeast).